The following is a 125-amino-acid chain: Fluoride-specific ion channel FluC (125 aa).

A run of 4 helical transmembrane segments spans residues 1–21, 34–54, 72–92, and 101–121; these read MFAT…ARYG, FPWA…FLFF, TGGL…LVLF, and LLYM…GAWI. 2 residues coordinate Na(+): Gly-76 and Thr-79.

It belongs to the fluoride channel Fluc/FEX (TC 1.A.43) family.

It is found in the cell inner membrane. The enzyme catalyses fluoride(in) = fluoride(out). With respect to regulation, na(+) is not transported, but it plays an essential structural role and its presence is essential for fluoride channel function. Functionally, fluoride-specific ion channel. Important for reducing fluoride concentration in the cell, thus reducing its toxicity. The chain is Fluoride-specific ion channel FluC from Acidithiobacillus ferrooxidans (strain ATCC 23270 / DSM 14882 / CIP 104768 / NCIMB 8455) (Ferrobacillus ferrooxidans (strain ATCC 23270)).